We begin with the raw amino-acid sequence, 78 residues long: Small ribosomal subunit protein eS17 (78 aa).

The protein belongs to the eukaryotic ribosomal protein eS17 family.

The polypeptide is Small ribosomal subunit protein eS17 (Sulfurisphaera tokodaii (strain DSM 16993 / JCM 10545 / NBRC 100140 / 7) (Sulfolobus tokodaii)).